The primary structure comprises 338 residues: Ketol-acid reductoisomerase (NADP(+)) (338 aa).

A KARI N-terminal Rossmann domain is found at 1–181 (MQVYYDKDAD…GGGRAGVIET (181 aa)). NADP(+)-binding positions include 24-27 (YGSQ), R47, S50, S52, and 82-85 (DEHQ). The active site involves H107. G133 is an NADP(+) binding site. Positions 182–327 (SFKDETETDL…AKLRDMMPWI (146 aa)) constitute a KARI C-terminal knotted domain. Positions 190, 194, 226, and 230 each coordinate Mg(2+). S251 provides a ligand contact to substrate.

This sequence belongs to the ketol-acid reductoisomerase family. Mg(2+) serves as cofactor.

The catalysed reaction is (2R)-2,3-dihydroxy-3-methylbutanoate + NADP(+) = (2S)-2-acetolactate + NADPH + H(+). The enzyme catalyses (2R,3R)-2,3-dihydroxy-3-methylpentanoate + NADP(+) = (S)-2-ethyl-2-hydroxy-3-oxobutanoate + NADPH + H(+). It functions in the pathway amino-acid biosynthesis; L-isoleucine biosynthesis; L-isoleucine from 2-oxobutanoate: step 2/4. It participates in amino-acid biosynthesis; L-valine biosynthesis; L-valine from pyruvate: step 2/4. Involved in the biosynthesis of branched-chain amino acids (BCAA). Catalyzes an alkyl-migration followed by a ketol-acid reduction of (S)-2-acetolactate (S2AL) to yield (R)-2,3-dihydroxy-isovalerate. In the isomerase reaction, S2AL is rearranged via a Mg-dependent methyl migration to produce 3-hydroxy-3-methyl-2-ketobutyrate (HMKB). In the reductase reaction, this 2-ketoacid undergoes a metal-dependent reduction by NADPH to yield (R)-2,3-dihydroxy-isovalerate. The sequence is that of Ketol-acid reductoisomerase (NADP(+)) from Thioalkalivibrio sulfidiphilus (strain HL-EbGR7).